Here is a 216-residue protein sequence, read N- to C-terminus: MPMNEPVDLQPSPSLLPMSRRFRGYLPVVVDVETGGFDWNKHALLEIACVPIEMDAQGHFFPGETASAHLVPAPGLEIDPKSLEITGIVLDHPFRFAKQEKDALDHVFAPVRAAVKKYGCQRAILVGHNAHFDLNFLNAAVARVGHKRNPFHPFSVFDTVTLAGVAYGQTVLARAAQAAGLDWNSADAHSAVYDTEQTARLFCKIANAWPGPASAG.

The Exonuclease domain occupies 28 to 202 (VVVDVETGGF…YDTEQTARLF (175 aa)). Mg(2+) contacts are provided by aspartate 31, glutamate 33, histidine 189, and aspartate 194. Histidine 189 (proton donor/acceptor) is an active-site residue.

Belongs to the RNase T family. Homodimer. It depends on Mg(2+) as a cofactor.

Functionally, trims short 3' overhangs of a variety of RNA species, leaving a one or two nucleotide 3' overhang. Responsible for the end-turnover of tRNA: specifically removes the terminal AMP residue from uncharged tRNA (tRNA-C-C-A). Also appears to be involved in tRNA biosynthesis. The polypeptide is Ribonuclease T (Xanthomonas campestris pv. campestris (strain 8004)).